The primary structure comprises 332 residues: MKPSDTRHIPVLGPEAVGLLAPRAGGIYVDGTFGAGGYTRLILETAGSRVIAIDRDPTAIAGGADLVADAGHRLTLVQDRFSNLADVCAAQGAATVDGVVMDIGVSSMQLDQAERGFSFRFDGPLDMRMGRDGPSAADVVARASETDLANIIYIFGEERYSRHVARAIVAARSDAPITTTKALADIVAKVVRAKPGEIHPATRTFQGLRIFVNEELDELHQALDAAERVLKPGGRLAVVSFHSLEDRIVKTFLTERSKTGGGSRHLPEVAQAAPSFTLLSKRPIVAGDAEVAANPRARSAKLRGAERTEAPAHAAGDLPGWPTLASVMRAGR.

S-adenosyl-L-methionine contacts are provided by residues 36-38, D54, F81, D102, and Q109; that span reads GGY. Positions 297–318 are disordered; it reads ARSAKLRGAERTEAPAHAAGDL.

It belongs to the methyltransferase superfamily. RsmH family.

The protein resides in the cytoplasm. The enzyme catalyses cytidine(1402) in 16S rRNA + S-adenosyl-L-methionine = N(4)-methylcytidine(1402) in 16S rRNA + S-adenosyl-L-homocysteine + H(+). Its function is as follows. Specifically methylates the N4 position of cytidine in position 1402 (C1402) of 16S rRNA. The chain is Ribosomal RNA small subunit methyltransferase H from Rhodopseudomonas palustris (strain TIE-1).